Here is a 194-residue protein sequence, read N- to C-terminus: NADH-quinone oxidoreductase subunit B (194 aa).

[4Fe-4S] cluster contacts are provided by Cys73, Cys74, Cys138, and Cys168.

This sequence belongs to the complex I 20 kDa subunit family. As to quaternary structure, NDH-1 is composed of 14 different subunits. Subunits NuoB, C, D, E, F, and G constitute the peripheral sector of the complex. Requires [4Fe-4S] cluster as cofactor.

The protein resides in the cell inner membrane. It carries out the reaction a quinone + NADH + 5 H(+)(in) = a quinol + NAD(+) + 4 H(+)(out). In terms of biological role, NDH-1 shuttles electrons from NADH, via FMN and iron-sulfur (Fe-S) centers, to quinones in the respiratory chain. The immediate electron acceptor for the enzyme in this species is believed to be ubiquinone. Couples the redox reaction to proton translocation (for every two electrons transferred, four hydrogen ions are translocated across the cytoplasmic membrane), and thus conserves the redox energy in a proton gradient. This is NADH-quinone oxidoreductase subunit B from Bradyrhizobium sp. (strain BTAi1 / ATCC BAA-1182).